The following is a 280-amino-acid chain: DegV domain-containing protein spyM18_1709 (280 aa).

The 278-residue stretch at 3–280 (WKIVTDSGCD…DGGLLMGYEI (278 aa)) folds into the DegV domain. Residues S63 and S91 each coordinate hexadecanoate.

May bind long-chain fatty acids, such as palmitate, and may play a role in lipid transport or fatty acid metabolism. This Streptococcus pyogenes serotype M18 (strain MGAS8232) protein is DegV domain-containing protein spyM18_1709.